Consider the following 882-residue polypeptide: DNA polymerase 1 (882 aa).

Positions 1–31 are disordered; the sequence is MTKQLTLFDIPSSKPAKSEQNTQQSQQSAPV. The span at 18–29 shows a compositional bias: polar residues; the sequence is SEQNTQQSQQSA.

The protein belongs to the DNA polymerase type-B family. Interacts with PCNA subunit PCNA2 and weakly with PCNA3.

It carries out the reaction DNA(n) + a 2'-deoxyribonucleoside 5'-triphosphate = DNA(n+1) + diphosphate. DNA synthesis is stimulated by PCNA heterotrimers. Functionally, this polymerase possesses two enzymatic activities: DNA synthesis (polymerase) and an exonucleolytic activity that degrades single-stranded DNA in the 3'- to 5'-direction. DNA polymerase I, DNA ligase and the flap endonuclease may be constitutively associated with the PCNA heterotrimer forming a scanning complex able to couple DNA synthesis and Okazaki fragment maturation. The chain is DNA polymerase 1 (dpo1) from Saccharolobus solfataricus (strain ATCC 35092 / DSM 1617 / JCM 11322 / P2) (Sulfolobus solfataricus).